The following is a 320-amino-acid chain: Ribonuclease Z (320 aa).

7 residues coordinate Zn(2+): His-63, His-65, Asp-67, His-68, His-141, Asp-212, and His-270. Asp-67 serves as the catalytic Proton acceptor.

Belongs to the RNase Z family. Homodimer. The cofactor is Zn(2+).

It catalyses the reaction Endonucleolytic cleavage of RNA, removing extra 3' nucleotides from tRNA precursor, generating 3' termini of tRNAs. A 3'-hydroxy group is left at the tRNA terminus and a 5'-phosphoryl group is left at the trailer molecule.. Zinc phosphodiesterase, which displays some tRNA 3'-processing endonuclease activity. Probably involved in tRNA maturation, by removing a 3'-trailer from precursor tRNA. The sequence is that of Ribonuclease Z from Lacticaseibacillus casei (strain BL23) (Lactobacillus casei).